The following is a 203-amino-acid chain: Protein-methionine-sulfoxide reductase heme-binding subunit MsrQ (203 aa).

Transmembrane regions (helical) follow at residues 10–30 (IFVV…MSLL), 42–62 (LGLG…LQKL), 75–95 (LGLW…FFIL), 110–130 (PYII…ITSN), 147–167 (LVYA…RSDL), and 169–189 (EWSI…PAVA).

Belongs to the MsrQ family. As to quaternary structure, heterodimer of a catalytic subunit (MsrP) and a heme-binding subunit (MsrQ). Requires FMN as cofactor. Heme b serves as cofactor.

The protein resides in the cell inner membrane. Its function is as follows. Part of the MsrPQ system that repairs oxidized periplasmic proteins containing methionine sulfoxide residues (Met-O), using respiratory chain electrons. Thus protects these proteins from oxidative-stress damage caused by reactive species of oxygen and chlorine generated by the host defense mechanisms. MsrPQ is essential for the maintenance of envelope integrity under bleach stress, rescuing a wide series of structurally unrelated periplasmic proteins from methionine oxidation. MsrQ provides electrons for reduction to the reductase catalytic subunit MsrP, using the quinone pool of the respiratory chain. The sequence is that of Protein-methionine-sulfoxide reductase heme-binding subunit MsrQ from Pseudomonas putida (strain GB-1).